Here is a 277-residue protein sequence, read N- to C-terminus: Proteasome subunit beta type-7 (277 aa).

Positions 1–43 are cleaved as a propeptide — removed in mature form; the sequence is MAAVSVYERPVGGFSFDNCRRNAVLEADFAKKGYKLPTARKTG. Residue T44 is the Nucleophile of the active site.

Belongs to the peptidase T1B family. In terms of assembly, the 26S proteasome consists of a 20S proteasome core and two 19S regulatory subunits. The 20S proteasome core is a barrel-shaped complex made of 28 subunits that are arranged in four stacked rings. The two outer rings are each formed by seven alpha subunits, and the two inner rings are formed by seven beta subunits. The proteolytic activity is exerted by three beta-subunits PSMB5, PSMB6 and PSMB7.

The protein resides in the cytoplasm. It localises to the nucleus. It carries out the reaction Cleavage of peptide bonds with very broad specificity.. Component of the 20S core proteasome complex involved in the proteolytic degradation of most intracellular proteins. This complex plays numerous essential roles within the cell by associating with different regulatory particles. Associated with two 19S regulatory particles, forms the 26S proteasome and thus participates in the ATP-dependent degradation of ubiquitinated proteins. The 26S proteasome plays a key role in the maintenance of protein homeostasis by removing misfolded or damaged proteins that could impair cellular functions, and by removing proteins whose functions are no longer required. Associated with the PA200 or PA28, the 20S proteasome mediates ubiquitin-independent protein degradation. This type of proteolysis is required in several pathways including spermatogenesis (20S-PA200 complex) or generation of a subset of MHC class I-presented antigenic peptides (20S-PA28 complex). Within the 20S core complex, PSMB7 displays a trypsin-like activity. The chain is Proteasome subunit beta type-7 (PSMB7) from Bos taurus (Bovine).